The following is a 371-amino-acid chain: Cathepsin W (371 aa).

Residues 1 to 21 form the signal peptide; the sequence is MTLTAHLSYFLVLLLAGQGLS. A propeptide spanning residues 22 to 125 is cleaved from the precursor; sequence DSLLTKDAGP…KVESNTWGES (104 aa). Residues Asn48 and Asn112 are each glycosylated (N-linked (GlcNAc...) asparagine). Cystine bridges form between Cys148-Cys189, Cys182-Cys224, and Cys282-Cys347. Residue Cys151 is part of the active site. A glycan (N-linked (GlcNAc...) asparagine) is linked at Asn203. Residues His289 and Asn326 contribute to the active site. N-linked (GlcNAc...) asparagine glycosylation occurs at Asn344.

Belongs to the peptidase C1 family.

The protein resides in the endoplasmic reticulum. Its function is as follows. May have a specific function in the mechanism or regulation of T-cell cytolytic activity. The chain is Cathepsin W (Ctsw) from Mus musculus (Mouse).